The primary structure comprises 173 residues: Large ribosomal subunit protein uL10 (173 aa).

The protein belongs to the universal ribosomal protein uL10 family. In terms of assembly, part of the ribosomal stalk of the 50S ribosomal subunit. The N-terminus interacts with L11 and the large rRNA to form the base of the stalk. The C-terminus forms an elongated spine to which L12 dimers bind in a sequential fashion forming a multimeric L10(L12)X complex.

Forms part of the ribosomal stalk, playing a central role in the interaction of the ribosome with GTP-bound translation factors. This chain is Large ribosomal subunit protein uL10 (rplJ), found in Synechocystis sp. (strain ATCC 27184 / PCC 6803 / Kazusa).